Reading from the N-terminus, the 102-residue chain is Small ribosomal subunit protein bS6 (102 aa).

It belongs to the bacterial ribosomal protein bS6 family.

Binds together with bS18 to 16S ribosomal RNA. The chain is Small ribosomal subunit protein bS6 from Desulfovibrio desulfuricans (strain ATCC 27774 / DSM 6949 / MB).